The primary structure comprises 210 residues: Orotate phosphoribosyltransferase (210 aa).

Residues arginine 94, lysine 98, histidine 100, and 120-128 (EDLISTGGS) each bind 5-phospho-alpha-D-ribose 1-diphosphate. Serine 124 is an orotate binding site.

Belongs to the purine/pyrimidine phosphoribosyltransferase family. PyrE subfamily. Homodimer. The cofactor is Mg(2+).

It carries out the reaction orotidine 5'-phosphate + diphosphate = orotate + 5-phospho-alpha-D-ribose 1-diphosphate. Its pathway is pyrimidine metabolism; UMP biosynthesis via de novo pathway; UMP from orotate: step 1/2. Its function is as follows. Catalyzes the transfer of a ribosyl phosphate group from 5-phosphoribose 1-diphosphate to orotate, leading to the formation of orotidine monophosphate (OMP). In Bacillus cereus (strain ATCC 14579 / DSM 31 / CCUG 7414 / JCM 2152 / NBRC 15305 / NCIMB 9373 / NCTC 2599 / NRRL B-3711), this protein is Orotate phosphoribosyltransferase.